The primary structure comprises 295 residues: MDNSGKEAEAMALLAEAERKVKNSQSFFSGLFGGSSKIEEACEIYARAANMFKMAKNWSAAGNAFCQAAQLHLQLQSKHDAATCFVDAGNAFKKADPQEAINCLMRAIEIYTDMGRFTIAAKHHISIAEIYETELVDIEKAIAHYEQSADYYKGEESNSSANKCLLKVAGYAALLEQYQKAIDIYEQVGTNAMDSPLLKYSAKDYFFKAALCHFCIDMLNAKLAVQKYEELFPAFSDSRECKLMKKLLEAHEEQNVDSYTESVKEYDSISRLDQWLTTMLLRIKKTIQGDEEDLR.

N-acetylmethionine is present on Met1. A phosphoserine mark is found at Ser26, Ser29, and Ser195.

It belongs to the SNAP family. In terms of assembly, interacts with PRKCABP, and disrupts the interaction between GRIA2 and PRKCABP, leading to the internalization of GRIA2. Found in a complex with VAMP8. Component of a SNARE-like complex that contains at least ZW10, USE1L, RINT1, STX18 and NAPA/SNAP-alpha. Interacts with VTI1A. Interacts with STX12. Interacts with GNA12 (via N-terminus); the interaction promotes CDH5 localization to plasma membrane.

It localises to the cell membrane. In terms of biological role, required for vesicular transport between the endoplasmic reticulum and the Golgi apparatus. Together with GNA12 promotes CDH5 localization to plasma membrane. The polypeptide is Alpha-soluble NSF attachment protein (NAPA) (Homo sapiens (Human)).